The following is a 439-amino-acid chain: Divalent metal cation transporter MntH (439 aa).

Helical transmembrane passes span Gly-32 to Asp-52, Gly-67 to Leu-87, Ile-121 to Leu-141, Met-144 to Glu-164, Leu-173 to Thr-193, Ala-214 to His-234, Val-261 to Gly-281, Ala-301 to Ile-321, Ala-350 to Leu-370, Val-371 to Phe-391, and Phe-406 to Ile-426.

This sequence belongs to the NRAMP family.

It is found in the cell inner membrane. In terms of biological role, h(+)-stimulated, divalent metal cation uptake system. The sequence is that of Divalent metal cation transporter MntH from Verminephrobacter eiseniae (strain EF01-2).